A 361-amino-acid polypeptide reads, in one-letter code: UDP-3-O-acylglucosamine N-acyltransferase (361 aa).

The active-site Proton acceptor is H264.

The protein belongs to the transferase hexapeptide repeat family. LpxD subfamily. Homotrimer.

The catalysed reaction is a UDP-3-O-[(3R)-3-hydroxyacyl]-alpha-D-glucosamine + a (3R)-hydroxyacyl-[ACP] = a UDP-2-N,3-O-bis[(3R)-3-hydroxyacyl]-alpha-D-glucosamine + holo-[ACP] + H(+). Its pathway is bacterial outer membrane biogenesis; LPS lipid A biosynthesis. Catalyzes the N-acylation of UDP-3-O-acylglucosamine using 3-hydroxyacyl-ACP as the acyl donor. Is involved in the biosynthesis of lipid A, a phosphorylated glycolipid that anchors the lipopolysaccharide to the outer membrane of the cell. The chain is UDP-3-O-acylglucosamine N-acyltransferase from Bordetella avium (strain 197N).